A 633-amino-acid polypeptide reads, in one-letter code: MA3 DOMAIN-CONTAINING TRANSLATION REGULATORY FACTOR 4 (633 aa).

MI domains follow at residues 56 to 177 (DYKR…RAKK), 220 to 341 (ETKR…ERSD), 351 to 472 (RFKK…EISN), and 514 to 633 (DAKD…STDS). Positions 94–101 (VKRLVSMA) match the Nuclear localization signal 1 motif. The short motif at 389 to 396 (LKKLITLA) is the Nuclear localization signal 2 element.

Belongs to the PDCD4 family. As to quaternary structure, binds to EIF4A1. The association with ribosomes is modulated by cellular energy status and TOR activity. Mostly expressed, at low levels, in rosette leaves and flower buds, and, to a lower extent, in roots, stems, cauline leaves and flowers.

The protein resides in the nucleus. The protein localises to the cytoplasm. It is found in the cytosol. In terms of biological role, involved in target of rapamycin (TOR)-regulated translation control, especially under energy-deficient conditions. In Arabidopsis thaliana (Mouse-ear cress), this protein is MA3 DOMAIN-CONTAINING TRANSLATION REGULATORY FACTOR 4.